Here is a 530-residue protein sequence, read N- to C-terminus: Ubiquitin carboxyl-terminal hydrolase 17-like protein 19 (530 aa).

In terms of domain architecture, USP spans 80 to 375; sequence AGLQNMGNTC…QAYVLFYIQK (296 aa). Cysteine 89 acts as the Nucleophile in catalysis. Histidine 334 serves as the catalytic Proton acceptor. Composition is skewed to basic and acidic residues over residues 382 to 392 and 398 to 413; these read SESVSRGREPR and DTDR…RDHP. Disordered regions lie at residues 382–413 and 476–530; these read SESV…RDHP and KNHH…LVCQ. Residues 484–495 show a composition bias toward low complexity; sequence SSLLKLSSTTPT. Residues 496-505 are compositionally biased toward polar residues; sequence HQESMNTGTL. The span at 510-524 shows a compositional bias: basic residues; the sequence is GRARRSKGKNKHSKR.

It belongs to the peptidase C19 family. USP17 subfamily.

The protein localises to the nucleus. It localises to the endoplasmic reticulum. It catalyses the reaction Thiol-dependent hydrolysis of ester, thioester, amide, peptide and isopeptide bonds formed by the C-terminal Gly of ubiquitin (a 76-residue protein attached to proteins as an intracellular targeting signal).. Deubiquitinating enzyme that removes conjugated ubiquitin from specific proteins to regulate different cellular processes that may include cell proliferation, progression through the cell cycle, apoptosis, cell migration, and the cellular response to viral infection. The sequence is that of Ubiquitin carboxyl-terminal hydrolase 17-like protein 19 (USP17L19) from Homo sapiens (Human).